Reading from the N-terminus, the 378-residue chain is Putative UDP-N-acetylglucosamine 2-epimerase (378 aa).

It belongs to the UDP-N-acetylglucosamine 2-epimerase family.

The protein resides in the cytoplasm. The enzyme catalyses UDP-N-acetyl-alpha-D-glucosamine = UDP-N-acetyl-alpha-D-mannosamine. In Thermotoga maritima (strain ATCC 43589 / DSM 3109 / JCM 10099 / NBRC 100826 / MSB8), this protein is Putative UDP-N-acetylglucosamine 2-epimerase.